A 67-amino-acid chain; its full sequence is Guanine nucleotide-binding protein G(I)/G(S)/G(O) subunit gamma-13 (67 aa).

Position 64 is a cysteine methyl ester (Cys-64). A lipid anchor (S-farnesyl cysteine) is attached at Cys-64. The propeptide at 65–67 (TIL) is removed in mature form.

It belongs to the G protein gamma family. In terms of assembly, g proteins are composed of 3 units, alpha, beta and gamma.

Its subcellular location is the cell membrane. Its function is as follows. Guanine nucleotide-binding proteins (G proteins) are involved as a modulator or transducer in various transmembrane signaling systems. The beta and gamma chains are required for the GTPase activity, for replacement of GDP by GTP, and for G protein-effector interaction. The chain is Guanine nucleotide-binding protein G(I)/G(S)/G(O) subunit gamma-13 (GNG13) from Homo sapiens (Human).